The sequence spans 213 residues: Adenylate kinase (213 aa).

ATP is bound at residue 10–15; that stretch reads GAGKGT. Positions 30–59 are NMP; the sequence is STGNLLRDEVKSKTDLGVDIEKLISNGKFV. Residues Thr-31, Arg-36, 57–59, 85–88, and Gln-92 each bind AMP; these read KFV and GYPR. Positions 126 to 162 are LID; it reads GRMTCEKCNMTLNEYFNKEQIELHPCGVEHLKKRKDD. Arg-127 contacts ATP. Positions 159 and 170 each coordinate AMP. Gly-198 is a binding site for ATP.

The protein belongs to the adenylate kinase family. In terms of assembly, monomer.

It localises to the cytoplasm. It catalyses the reaction AMP + ATP = 2 ADP. It functions in the pathway purine metabolism; AMP biosynthesis via salvage pathway; AMP from ADP: step 1/1. Its function is as follows. Catalyzes the reversible transfer of the terminal phosphate group between ATP and AMP. Plays an important role in cellular energy homeostasis and in adenine nucleotide metabolism. The chain is Adenylate kinase from Pelagibacter ubique (strain HTCC1062).